A 195-amino-acid polypeptide reads, in one-letter code: UPF0215 protein TGAM_0348 (195 aa).

The protein belongs to the UPF0215 family.

The sequence is that of UPF0215 protein TGAM_0348 from Thermococcus gammatolerans (strain DSM 15229 / JCM 11827 / EJ3).